A 93-amino-acid chain; its full sequence is uncharacterized protein (93 aa).

The segment at 35 to 72 (KSVPPPTPPKPVKKTPSPTLPKPSKQKQEPQVEVNEDR) is disordered. The segment covering 60-72 (QKQEPQVEVNEDR) has biased composition (basic and acidic residues).

This is an uncharacterized protein from Ostreid herpesvirus 1 (isolate France) (OsHV-1).